A 179-amino-acid polypeptide reads, in one-letter code: CDP-archaeol synthase (179 aa).

4 helical membrane passes run 53-73, 88-108, 120-140, and 145-165; these read FVGG…IEKL, FTLT…GSFI, FLIV…SLYP, and LFTA…HMGI.

This sequence belongs to the CDP-archaeol synthase family. Mg(2+) serves as cofactor.

It is found in the cell membrane. The catalysed reaction is 2,3-bis-O-(geranylgeranyl)-sn-glycerol 1-phosphate + CTP + H(+) = CDP-2,3-bis-O-(geranylgeranyl)-sn-glycerol + diphosphate. The protein operates within membrane lipid metabolism; glycerophospholipid metabolism. Catalyzes the formation of CDP-2,3-bis-(O-geranylgeranyl)-sn-glycerol (CDP-archaeol) from 2,3-bis-(O-geranylgeranyl)-sn-glycerol 1-phosphate (DGGGP) and CTP. This reaction is the third ether-bond-formation step in the biosynthesis of archaeal membrane lipids. Can use CTP or dCTP, but not ATP, GTP or TTP. The polypeptide is CDP-archaeol synthase (Archaeoglobus fulgidus (strain ATCC 49558 / DSM 4304 / JCM 9628 / NBRC 100126 / VC-16)).